The primary structure comprises 389 residues: Putative DNA processing protein DprA (389 aa).

It belongs to the DprA/Smf family.

Functionally, may help load RecA onto ssDNA. The protein is Putative DNA processing protein DprA of Mycobacterium tuberculosis (strain CDC 1551 / Oshkosh).